The chain runs to 669 residues: UvrABC system protein B (669 aa).

Residues 26–183 (TNFHAGIAKQ…RHLTELQYTR (158 aa)) enclose the Helicase ATP-binding domain. Position 39 to 46 (39 to 46 (GVTGSGKT)) interacts with ATP. The Beta-hairpin motif lies at 92–115 (YYDYYQPEAYVPASDTFIEKDSSI). The Helicase C-terminal domain occupies 431–597 (QVDDLISQIN…SVVRPISDIL (167 aa)). Positions 631-666 (AAQMKVLEQKMYQHARDLEFEDAARIRDQIQRLREA) constitute a UVR domain.

This sequence belongs to the UvrB family. As to quaternary structure, forms a heterotetramer with UvrA during the search for lesions. Interacts with UvrC in an incision complex.

Its subcellular location is the cytoplasm. In terms of biological role, the UvrABC repair system catalyzes the recognition and processing of DNA lesions. A damage recognition complex composed of 2 UvrA and 2 UvrB subunits scans DNA for abnormalities. Upon binding of the UvrA(2)B(2) complex to a putative damaged site, the DNA wraps around one UvrB monomer. DNA wrap is dependent on ATP binding by UvrB and probably causes local melting of the DNA helix, facilitating insertion of UvrB beta-hairpin between the DNA strands. Then UvrB probes one DNA strand for the presence of a lesion. If a lesion is found the UvrA subunits dissociate and the UvrB-DNA preincision complex is formed. This complex is subsequently bound by UvrC and the second UvrB is released. If no lesion is found, the DNA wraps around the other UvrB subunit that will check the other stand for damage. The sequence is that of UvrABC system protein B from Xylella fastidiosa (strain M23).